Consider the following 218-residue polypeptide: Octanoyltransferase (218 aa).

In terms of domain architecture, BPL/LPL catalytic spans 27–210 (AGAEETLYLL…QFRAIFADST (184 aa)). Residues 72–79 (RGGNITCH), 139–141 (SIG), and 152–154 (GFA) contribute to the substrate site. The active-site Acyl-thioester intermediate is the cysteine 170.

It belongs to the LipB family.

Its subcellular location is the cytoplasm. It catalyses the reaction octanoyl-[ACP] + L-lysyl-[protein] = N(6)-octanoyl-L-lysyl-[protein] + holo-[ACP] + H(+). Its pathway is protein modification; protein lipoylation via endogenous pathway; protein N(6)-(lipoyl)lysine from octanoyl-[acyl-carrier-protein]: step 1/2. Functionally, catalyzes the transfer of endogenously produced octanoic acid from octanoyl-acyl-carrier-protein onto the lipoyl domains of lipoate-dependent enzymes. Lipoyl-ACP can also act as a substrate although octanoyl-ACP is likely to be the physiological substrate. The chain is Octanoyltransferase from Nitratidesulfovibrio vulgaris (strain DSM 19637 / Miyazaki F) (Desulfovibrio vulgaris).